Consider the following 782-residue polypeptide: Spastin (782 aa).

Positions M1–S103 are disordered. Over M1–P115 the chain is Cytoplasmic. The segment at M1–G212 is required for localization to punctate cytoplasmic foci. Residues S8–S19 show a composition bias toward low complexity. Residues G25 to C34 show a composition bias toward polar residues. Composition is skewed to low complexity over residues S44–P75 and T84–S93. Residues I116–Y136 constitute an intramembrane region (helical). Residues L137–I782 are Cytoplasmic-facing. The sufficient for interaction with microtubules and microtubule severing stretch occupies residues M210 to I782. The MIT domain occupies H235–L310. The segment at K325–M479 is disordered. Low complexity predominate over residues P334–Q343. Composition is skewed to polar residues over residues N408–V426 and Q447–I463. The segment at N465 to M479 is required for interaction with microtubules. G547–T554 lines the ATP pocket.

This sequence belongs to the AAA ATPase family. Spastin subfamily. As to quaternary structure, homohexamer. The homohexamer is stabilized by ATP-binding. The homohexamer may adopt a ring conformation through which microtubules pass prior to being severed. Interacts with microtubules. Interacts with atl; may be involved in microtubule dynamics.

It is found in the membrane. Its subcellular location is the cytoplasm. The protein localises to the cytoskeleton. The protein resides in the microtubule organizing center. It localises to the centrosome. It is found in the chromosome. Its subcellular location is the lipid droplet. The catalysed reaction is n ATP + n H2O + a microtubule = n ADP + n phosphate + (n+1) alpha/beta tubulin heterodimers.. In terms of biological role, ATP-dependent microtubule severing protein. Stimulates microtubule minus-end depolymerization and poleward microtubule flux in the mitotic spindle. Regulates microtubule stability in the neuromuscular junction synapse. Involved in lipid metabolism by regulating the size and distribution of lipid droplets. Involved in axon regeneration by regulating microtubule severing. In Drosophila grimshawi (Hawaiian fruit fly), this protein is Spastin.